The sequence spans 382 residues: Galactokinase (382 aa).

34-37 (EHTD) is a substrate binding site. 124–130 (GAGLSSS) contributes to the ATP binding site. Residues Ser130 and Glu162 each coordinate Mg(2+). Asp174 serves as the catalytic Proton acceptor. Tyr223 serves as a coordination point for substrate.

Belongs to the GHMP kinase family. GalK subfamily.

The protein localises to the cytoplasm. The enzyme catalyses alpha-D-galactose + ATP = alpha-D-galactose 1-phosphate + ADP + H(+). It functions in the pathway carbohydrate metabolism; galactose metabolism. Catalyzes the transfer of the gamma-phosphate of ATP to D-galactose to form alpha-D-galactose-1-phosphate (Gal-1-P). In Escherichia fergusonii (strain ATCC 35469 / DSM 13698 / CCUG 18766 / IAM 14443 / JCM 21226 / LMG 7866 / NBRC 102419 / NCTC 12128 / CDC 0568-73), this protein is Galactokinase.